The chain runs to 433 residues: Signal recognition particle 54 kDa protein (433 aa).

GTP is bound by residues 100-107, 180-184, and 238-241; these read GLQGSGKT, DTAGR, and TKFD.

Belongs to the GTP-binding SRP family. SRP54 subfamily. In terms of assembly, part of the signal recognition particle protein translocation system, which is composed of SRP and FtsY. Archaeal SRP consists of a 7S RNA molecule of 300 nucleotides and two protein subunits: SRP54 and SRP19.

The protein localises to the cytoplasm. It catalyses the reaction GTP + H2O = GDP + phosphate + H(+). In terms of biological role, involved in targeting and insertion of nascent membrane proteins into the cytoplasmic membrane. Binds to the hydrophobic signal sequence of the ribosome-nascent chain (RNC) as it emerges from the ribosomes. The SRP-RNC complex is then targeted to the cytoplasmic membrane where it interacts with the SRP receptor FtsY. The polypeptide is Signal recognition particle 54 kDa protein (Archaeoglobus fulgidus (strain ATCC 49558 / DSM 4304 / JCM 9628 / NBRC 100126 / VC-16)).